We begin with the raw amino-acid sequence, 720 residues long: Pro-neuregulin-3, membrane-bound isoform (720 aa).

Residues 1-360 (MSEGAAAASP…MESEEVYQRQ (360 aa)) lie on the Extracellular side of the membrane. Disordered stretches follow at residues 28-48 (AAAA…AAEP), 119-223 (SSFP…AMPS), and 246-280 (PFQD…TTYS). Residues 34–44 (AGGGPDGGGEG) show a composition bias toward gly residues. Residues 127–148 (TTTTTTSTTSPATPSAGGAASS) are compositionally biased toward low complexity. The segment covering 149-163 (RTPNRISTRLTTITR) has biased composition (polar residues). Composition is skewed to low complexity over residues 187 to 205 (TAAP…SSST) and 250 to 271 (AASS…TSTS). The EGF-like domain occupies 286-329 (HFKPCRDKDLAYCLNDGECFVIETLTGSHKHCRCKEGYQGVRCD). 3 disulfide bridges follow: Cys290/Cys304, Cys298/Cys317, and Cys319/Cys328. Residues 361–381 (VLSISCIIFGIVIVGMFCAAF) form a helical membrane-spanning segment. Over 382–720 (YFKSKKQAKQ…EIQRDSALTK (339 aa)) the chain is Cytoplasmic. The tract at residues 451 to 481 (PQSFPEVPSPDRGSQSVKHHRSLSSCCSPGQ) is disordered.

This sequence belongs to the neuregulin family. Interacts with ERBB4. Post-translationally, proteolytic cleavage close to the plasma membrane on the external face leads to the release of the soluble growth factor form. Extensive glycosylation precedes the proteolytic cleavage. Isoform 3 is glycosylated. Highly expressed in most regions of the brain with the exception of corpus callosum. Expressed at lower level in testis. Not detected in heart, placenta, lung, liver, skeletal muscle, kidney, pancreas, spleen, thymus, prostate, ovary, small intestine, colon and peripheral blood leukocytes.

The protein resides in the cell membrane. Its subcellular location is the secreted. In terms of biological role, direct ligand for the ERBB4 tyrosine kinase receptor. Binding results in ligand-stimulated tyrosine phosphorylation and activation of the receptor. Does not bind to the EGF receptor, ERBB2 or ERBB3 receptors. May be a survival factor for oligodendrocytes. This is Pro-neuregulin-3, membrane-bound isoform (NRG3) from Homo sapiens (Human).